The primary structure comprises 889 residues: Protein translocase subunit SecA (889 aa).

ATP is bound by residues Gln87, 105–109 (GEGKT), and Asp494. Positions 823–889 (ESLRPEEADL…RMDKDTKGKR (67 aa)) are disordered. Basic and acidic residues predominate over residues 867-889 (PRDDRPMNREERRRMDKDTKGKR).

Belongs to the SecA family. In terms of assembly, monomer and homodimer. Part of the essential Sec protein translocation apparatus which comprises SecA, SecYEG and auxiliary proteins SecDF-YajC and YidC.

Its subcellular location is the cell inner membrane. The protein resides in the cytoplasm. The catalysed reaction is ATP + H2O + cellular proteinSide 1 = ADP + phosphate + cellular proteinSide 2.. Its function is as follows. Part of the Sec protein translocase complex. Interacts with the SecYEG preprotein conducting channel. Has a central role in coupling the hydrolysis of ATP to the transfer of proteins into and across the cell membrane, serving as an ATP-driven molecular motor driving the stepwise translocation of polypeptide chains across the membrane. The polypeptide is Protein translocase subunit SecA (Bdellovibrio bacteriovorus (strain ATCC 15356 / DSM 50701 / NCIMB 9529 / HD100)).